A 613-amino-acid chain; its full sequence is Probable LRR receptor-like serine/threonine-protein kinase At5g10290 (613 aa).

An N-terminal signal peptide occupies residues 1–31 (MRMFSLQKMAMAFTLLFFACLCSFVSPDAQG). Over 32 to 225 (DALFALRISL…SGDSSKPKTG (194 aa)) the chain is Extracellular. N81 and N116 each carry an N-linked (GlcNAc...) asparagine glycan. 4 LRR repeats span residues 95-117 (NLKT…FGNL), 119-141 (SLTS…IGNL), 143-166 (KLQF…TGLP), and 167-189 (NLLN…LFEI). N-linked (GlcNAc...) asparagine glycosylation is present at N155. The N-linked (GlcNAc...) asparagine glycan is linked to N193. Residues 226-246 (IIAGVVAGVTVVLFGILLFLF) traverse the membrane as a helical segment. Residues 247–613 (CKDRHKGYRR…QDAIELSGGR (367 aa)) are Cytoplasmic-facing. T287 carries the phosphothreonine modification. Positions 290 to 569 (FSEKNVLGQG…VVRMLEGEGL (280 aa)) constitute a Protein kinase domain. 296–304 (LGQGGFGKV) serves as a coordination point for ATP. T313 carries the phosphothreonine modification. Position 318 (K318) interacts with ATP. Phosphoserine is present on S371. T390 bears the Phosphothreonine mark. Catalysis depends on D417, which acts as the Proton acceptor. Phosphothreonine occurs at positions 450, 451, and 456. Y464 carries the phosphotyrosine modification. A Phosphoserine modification is found at S466. A Phosphothreonine modification is found at T467. A Phosphoserine modification is found at S471. Phosphothreonine is present on T547.

The protein belongs to the protein kinase superfamily. Ser/Thr protein kinase family.

It localises to the cell membrane. It catalyses the reaction L-seryl-[protein] + ATP = O-phospho-L-seryl-[protein] + ADP + H(+). The catalysed reaction is L-threonyl-[protein] + ATP = O-phospho-L-threonyl-[protein] + ADP + H(+). The protein is Probable LRR receptor-like serine/threonine-protein kinase At5g10290 of Arabidopsis thaliana (Mouse-ear cress).